The chain runs to 47 residues: PhoP/PhoQ regulator MgrB (47 aa).

The helical transmembrane segment at 6 to 26 (WLVLIVVVLACLVLWAQVINI) threads the bilayer.

It belongs to the MgrB family. As to quaternary structure, may form homooligomers. Probably interacts with the periplasmic domain of PhoQ.

Its subcellular location is the cell inner membrane. Functionally, phoP-regulated transcription is redox-sensitive, being activated when the periplasm becomes more reducing. MgrB acts between DsbA/DsbB and PhoP/PhoQ in this pathway. Represses PhoP/PhoQ signaling, possibly by binding to the periplasmic domain of PhoQ, altering its activity and that of downstream effector PhoP. In Escherichia fergusonii (strain ATCC 35469 / DSM 13698 / CCUG 18766 / IAM 14443 / JCM 21226 / LMG 7866 / NBRC 102419 / NCTC 12128 / CDC 0568-73), this protein is PhoP/PhoQ regulator MgrB.